Here is a 1241-residue protein sequence, read N- to C-terminus: ATP-dependent helicase/nuclease subunit A (1241 aa).

One can recognise a UvrD-like helicase ATP-binding domain in the interval 12–485 (SQWTDDQWKA…IDLAKNFRSR (474 aa)). Position 33–40 (33–40 (AAAGSGKT)) interacts with ATP. A UvrD-like helicase C-terminal domain is found at 505–805 (GEIDYDADAE…RIMTIHKSKG (301 aa)).

The protein belongs to the helicase family. AddA subfamily. As to quaternary structure, heterodimer of AddA and AddB/RexB. It depends on Mg(2+) as a cofactor.

It carries out the reaction Couples ATP hydrolysis with the unwinding of duplex DNA by translocating in the 3'-5' direction.. The enzyme catalyses ATP + H2O = ADP + phosphate + H(+). In terms of biological role, the heterodimer acts as both an ATP-dependent DNA helicase and an ATP-dependent, dual-direction single-stranded exonuclease. Recognizes the chi site generating a DNA molecule suitable for the initiation of homologous recombination. The AddA nuclease domain is required for chi fragment generation; this subunit has the helicase and 3' -&gt; 5' nuclease activities. This chain is ATP-dependent helicase/nuclease subunit A, found in Bacillus cereus (strain B4264).